The following is a 426-amino-acid chain: Citrate transporter (426 aa).

The next 12 membrane-spanning stretches (helical) occupy residues 1-21 (MLAI…MSNR), 22-42 (LSAL…SGFG), 59-79 (TGIM…SGLF), 86-106 (ILSF…VLTM), 137-157 (LVLA…PWGG), 176-196 (PLIP…YILG), 232-252 (LLTV…PVLF), 278-298 (AGNA…TGIL), 318-338 (AMGP…TFFM), 343-363 (FYFG…IDAA), 377-397 (LLSP…VSFG), and 406-426 (WAVG…IISF).

The protein belongs to the CitM (TC 2.A.11) transporter family.

It is found in the cell membrane. Its function is as follows. Transports the free citrate anion. Probably cotransports citrate and at least three or four protons. The citrate uptake is inhibited by the presence of magnesium ions. In Bacillus subtilis (strain 168), this protein is Citrate transporter (citN).